Consider the following 132-residue polypeptide: Fatty acid-binding protein, liver (132 aa).

Position 1 is an N-acetylvaline (Val-1). The residue at position 19 (Tyr-19) is a Phosphotyrosine; by Tyr-kinases.

Belongs to the calycin superfamily. Fatty-acid binding protein (FABP) family.

Its subcellular location is the cytoplasm. In terms of biological role, FABPs are thought to play a role in the intracellular transport of long-chain fatty acids and their acyl-CoA esters. The polypeptide is Fatty acid-binding protein, liver (Ginglymostoma cirratum (Nurse shark)).